The sequence spans 477 residues: Probable cytosolic Fe-S cluster assembly factor GM20417 (477 aa).

Cysteine 23, cysteine 68, cysteine 71, cysteine 74, cysteine 187, cysteine 243, cysteine 395, and cysteine 399 together coordinate [4Fe-4S] cluster.

This sequence belongs to the NARF family.

Its function is as follows. Component of the cytosolic iron-sulfur (Fe/S) protein assembly machinery. Required for maturation of extramitochondrial Fe/S proteins. The chain is Probable cytosolic Fe-S cluster assembly factor GM20417 from Drosophila sechellia (Fruit fly).